The primary structure comprises 246 residues: Small ribosomal subunit protein uS2 (246 aa).

This sequence belongs to the universal ribosomal protein uS2 family.

In Dictyoglomus turgidum (strain DSM 6724 / Z-1310), this protein is Small ribosomal subunit protein uS2.